The sequence spans 483 residues: Uridine/cytidine kinase UKL1, chloroplastic (483 aa).

The N-terminal 47 residues, 1–47 (MPEDSTAIDYVMEKASGPHFSGLRLDGLLSSPSKSSVSSPSHFRLSN), are a transit peptide targeting the chloroplast. Positions 59 to 264 (PHQPFVIGVT…IVQHIHTKLG (206 aa)) are uridine kinase. The uracil phosphoribosyltransferase stretch occupies residues 274–483 (NVFVIETTFQ…FGDRYFGTDE (210 aa)). GTP is bound by residues K298, R307, and 341-344 (CKKL). R351 and R376 together coordinate 5-phospho-alpha-D-ribose 1-diphosphate. R396 provides a ligand contact to GTP. 5-phospho-alpha-D-ribose 1-diphosphate is bound by residues D402, 407–410 (TGNS), and E473. 472–474 (GEF) serves as a coordination point for uracil.

In the N-terminal section; belongs to the uridine kinase family. The protein in the C-terminal section; belongs to the UPRTase family.

The protein localises to the plastid. The protein resides in the chloroplast. The catalysed reaction is cytidine + ATP = CMP + ADP + H(+). It carries out the reaction uridine + ATP = UMP + ADP + H(+). It participates in pyrimidine metabolism; CTP biosynthesis via salvage pathway; CTP from cytidine: step 1/3. It functions in the pathway pyrimidine metabolism; UMP biosynthesis via salvage pathway; UMP from uridine: step 1/1. Involved in the pyrimidine salvage pathway. Phosphorylates uridine to uridine monophosphate (UMP). Phosphorylates cytidine to cytidine monophosphate (CMP). Does not possess uracil phosphoribosyltransferase (UPRTase) activity that catalyzes the conversion of uracil and 5-phospho-alpha-D-ribose 1-diphosphate (PRPP) to UMP and diphosphate. The protein is Uridine/cytidine kinase UKL1, chloroplastic of Arabidopsis thaliana (Mouse-ear cress).